A 236-amino-acid chain; its full sequence is (5-formylfuran-3-yl)methyl phosphate synthase (236 aa).

The active-site Schiff-base intermediate with substrate is the lysine 27. Residue lysine 85 is the Proton acceptor of the active site.

The protein belongs to the MfnB family.

The catalysed reaction is 2 D-glyceraldehyde 3-phosphate = 4-(hydroxymethyl)-2-furancarboxaldehyde phosphate + phosphate + 2 H2O. The protein operates within cofactor biosynthesis; methanofuran biosynthesis. In terms of biological role, catalyzes the formation of 4-(hydroxymethyl)-2-furancarboxaldehyde phosphate (4-HFC-P) from two molecules of glyceraldehyde-3-P (GA-3-P). The protein is (5-formylfuran-3-yl)methyl phosphate synthase of Methanococcus maripaludis (strain DSM 14266 / JCM 13030 / NBRC 101832 / S2 / LL).